The sequence spans 97 residues: uncharacterized protein (97 aa).

A signal peptide spans 1–21 (MNKKFSISLLSTILAFLLVLG). Cys22 is lipidated: N-palmitoyl cysteine. Cys22 carries S-diacylglycerol cysteine lipidation.

This sequence to B.burgdorferi BBD15.

The protein resides in the cell membrane. This is an uncharacterized protein from Borreliella burgdorferi (strain ATCC 35210 / DSM 4680 / CIP 102532 / B31) (Borrelia burgdorferi).